The primary structure comprises 204 residues: Probable nicotinate-nucleotide adenylyltransferase (204 aa).

It belongs to the NadD family.

The enzyme catalyses nicotinate beta-D-ribonucleotide + ATP + H(+) = deamido-NAD(+) + diphosphate. The protein operates within cofactor biosynthesis; NAD(+) biosynthesis; deamido-NAD(+) from nicotinate D-ribonucleotide: step 1/1. In terms of biological role, catalyzes the reversible adenylation of nicotinate mononucleotide (NaMN) to nicotinic acid adenine dinucleotide (NaAD). In Mycobacterium sp. (strain JLS), this protein is Probable nicotinate-nucleotide adenylyltransferase.